The primary structure comprises 391 residues: Phosphopentomutase (391 aa).

Mn(2+)-binding residues include aspartate 12, aspartate 285, histidine 290, aspartate 326, histidine 327, and histidine 338.

The protein belongs to the phosphopentomutase family. The cofactor is Mn(2+).

It localises to the cytoplasm. The catalysed reaction is 2-deoxy-alpha-D-ribose 1-phosphate = 2-deoxy-D-ribose 5-phosphate. It catalyses the reaction alpha-D-ribose 1-phosphate = D-ribose 5-phosphate. It participates in carbohydrate degradation; 2-deoxy-D-ribose 1-phosphate degradation; D-glyceraldehyde 3-phosphate and acetaldehyde from 2-deoxy-alpha-D-ribose 1-phosphate: step 1/2. Isomerase that catalyzes the conversion of deoxy-ribose 1-phosphate (dRib-1-P) and ribose 1-phosphate (Rib-1-P) to deoxy-ribose 5-phosphate (dRib-5-P) and ribose 5-phosphate (Rib-5-P), respectively. This is Phosphopentomutase from Herpetosiphon aurantiacus (strain ATCC 23779 / DSM 785 / 114-95).